Here is a 142-residue protein sequence, read N- to C-terminus: Large ribosomal subunit protein uL11 (142 aa).

This sequence belongs to the universal ribosomal protein uL11 family. Part of the ribosomal stalk of the 50S ribosomal subunit. Interacts with L10 and the large rRNA to form the base of the stalk. L10 forms an elongated spine to which L12 dimers bind in a sequential fashion forming a multimeric L10(L12)X complex. One or more lysine residues are methylated.

Functionally, forms part of the ribosomal stalk which helps the ribosome interact with GTP-bound translation factors. In Xanthomonas axonopodis pv. citri (strain 306), this protein is Large ribosomal subunit protein uL11.